The following is a 108-amino-acid chain: Alkyltransferase-like protein 1 (108 aa).

It belongs to the MGMT family. ATL subfamily.

Functionally, involved in DNA damage recognition. Binds DNA containing O(6)-methylguanine and larger O(6)-alkylguanine adducts. The DNA is bent, the damaged base is rotated out of the DNA duplex into a hydrophobic binding pocket (nucleotide flipping), with Arg-39 donating a hydrogen bond to the orphaned cytosine to stabilize the extrahelical DNA conformation. This structural change in DNA presents the lesion to the nucleotide excision repair (NER) pathway. The affinity for O(6)-alkylguanine adducts increases with the size of the alkyl group. Low affinity small O(6)-alkylguanines are directed to the global genome repair pathway of NER via rhp7-rhp16 and rhp41-rhp23, while strong binding to bulky O(6)-alkylguanines stalls the transcription machinery and diverts the damage to the transcription-coupled repair pathway of NER via rhp26. This chain is Alkyltransferase-like protein 1, found in Schizosaccharomyces pombe (strain 972 / ATCC 24843) (Fission yeast).